The following is a 717-amino-acid chain: DNA ligase (717 aa).

NAD(+) is bound by residues 44 to 48 (DADYD), 93 to 94 (SL), and Glu-127. Lys-129 functions as the N6-AMP-lysine intermediate in the catalytic mechanism. Residues Arg-150, Glu-186, Lys-302, and Lys-326 each coordinate NAD(+). Cys-431, Cys-434, Cys-455, and Cys-461 together coordinate Zn(2+). Residues 639-717 (ATDSPVAGKT…EDEWLALIGG (79 aa)) enclose the BRCT domain.

It belongs to the NAD-dependent DNA ligase family. LigA subfamily. Requires Mg(2+) as cofactor. It depends on Mn(2+) as a cofactor.

The enzyme catalyses NAD(+) + (deoxyribonucleotide)n-3'-hydroxyl + 5'-phospho-(deoxyribonucleotide)m = (deoxyribonucleotide)n+m + AMP + beta-nicotinamide D-nucleotide.. Its function is as follows. DNA ligase that catalyzes the formation of phosphodiester linkages between 5'-phosphoryl and 3'-hydroxyl groups in double-stranded DNA using NAD as a coenzyme and as the energy source for the reaction. It is essential for DNA replication and repair of damaged DNA. This Sinorhizobium medicae (strain WSM419) (Ensifer medicae) protein is DNA ligase.